The following is a 231-amino-acid chain: Ureidoacrylate amidohydrolase RutB (231 aa).

Asp-25 functions as the Proton acceptor in the catalytic mechanism. The active site involves Lys-134. The active-site Nucleophile is the Cys-167.

It belongs to the isochorismatase family. RutB subfamily.

The enzyme catalyses (Z)-3-ureidoacrylate + H2O + H(+) = (Z)-3-aminoacrylate + NH4(+) + CO2. It carries out the reaction (Z)-3-ureidoacrylate + H2O = (Z)-3-aminoacrylate + carbamate + H(+). It catalyses the reaction (Z)-2-methylureidoacrylate + H2O + H(+) = (Z)-2-methylaminoacrylate + NH4(+) + CO2. Hydrolyzes ureidoacrylate to form aminoacrylate and carbamate. The carbamate hydrolyzes spontaneously, thereby releasing one of the nitrogen atoms of the pyrimidine ring as ammonia and one of its carbon atoms as CO2. In Escherichia coli O139:H28 (strain E24377A / ETEC), this protein is Ureidoacrylate amidohydrolase RutB.